A 129-amino-acid polypeptide reads, in one-letter code: MKEVIDTVGRRKTSVARVFMTPGKGRVIINKLPVEEYFKDEVRRSKALRPLALTERTEEFDIKVNVQGGGITGQSGAVSLGIARALTEFDETVRPILKTEKLLTRDPRMVERKKFGRKKARKRFQFSKR.

The protein belongs to the universal ribosomal protein uS9 family.

The sequence is that of Small ribosomal subunit protein uS9 from Chlorobium limicola (strain DSM 245 / NBRC 103803 / 6330).